Reading from the N-terminus, the 148-residue chain is Putative pre-16S rRNA nuclease (148 aa).

This sequence belongs to the YqgF nuclease family.

It is found in the cytoplasm. Its function is as follows. Could be a nuclease involved in processing of the 5'-end of pre-16S rRNA. The polypeptide is Putative pre-16S rRNA nuclease (Chromohalobacter salexigens (strain ATCC BAA-138 / DSM 3043 / CIP 106854 / NCIMB 13768 / 1H11)).